The primary structure comprises 354 residues: Methylthioribose-1-phosphate isomerase (354 aa).

Substrate-binding positions include 58-60 (RGA), arginine 101, and glutamine 204. Residue aspartate 245 is the Proton donor of the active site. 255-256 (NK) is a binding site for substrate.

This sequence belongs to the eIF-2B alpha/beta/delta subunits family. MtnA subfamily.

The catalysed reaction is 5-(methylsulfanyl)-alpha-D-ribose 1-phosphate = 5-(methylsulfanyl)-D-ribulose 1-phosphate. It participates in amino-acid biosynthesis; L-methionine biosynthesis via salvage pathway; L-methionine from S-methyl-5-thio-alpha-D-ribose 1-phosphate: step 1/6. Its function is as follows. Catalyzes the interconversion of methylthioribose-1-phosphate (MTR-1-P) into methylthioribulose-1-phosphate (MTRu-1-P). The chain is Methylthioribose-1-phosphate isomerase from Stenotrophomonas maltophilia (strain R551-3).